A 144-amino-acid polypeptide reads, in one-letter code: Large ribosomal subunit protein uL15 (144 aa).

A disordered region spans residues 1 to 57 (MKLNDLSPAPGSRREKHRPGRGIGSGLGKTGGRGHKGQTSRSGGSIAPGFEGGQQPL). Residues 21–31 (RGIGSGLGKTG) are compositionally biased toward gly residues.

It belongs to the universal ribosomal protein uL15 family. Part of the 50S ribosomal subunit.

Binds to the 23S rRNA. This chain is Large ribosomal subunit protein uL15, found in Pseudomonas entomophila (strain L48).